Reading from the N-terminus, the 320-residue chain is tRNA pseudouridine synthase B (320 aa).

Residue Asp-49 is the Nucleophile of the active site.

The protein belongs to the pseudouridine synthase TruB family. Type 1 subfamily.

The enzyme catalyses uridine(55) in tRNA = pseudouridine(55) in tRNA. Responsible for synthesis of pseudouridine from uracil-55 in the psi GC loop of transfer RNAs. In Bartonella bacilliformis (strain ATCC 35685 / KC583 / Herrer 020/F12,63), this protein is tRNA pseudouridine synthase B.